Consider the following 337-residue polypeptide: Phosphate acyltransferase (337 aa).

Belongs to the PlsX family. Homodimer. Probably interacts with PlsY.

Its subcellular location is the cytoplasm. The catalysed reaction is a fatty acyl-[ACP] + phosphate = an acyl phosphate + holo-[ACP]. The protein operates within lipid metabolism; phospholipid metabolism. In terms of biological role, catalyzes the reversible formation of acyl-phosphate (acyl-PO(4)) from acyl-[acyl-carrier-protein] (acyl-ACP). This enzyme utilizes acyl-ACP as fatty acyl donor, but not acyl-CoA. The protein is Phosphate acyltransferase of Polynucleobacter asymbioticus (strain DSM 18221 / CIP 109841 / QLW-P1DMWA-1) (Polynucleobacter necessarius subsp. asymbioticus).